We begin with the raw amino-acid sequence, 202 residues long: Large ribosomal subunit protein bL9 (202 aa).

Residues 168-202 form a disordered region; that stretch reads DEAGFTEDYDPNAEPGEIPTELQDEAPAAEATDEA. Residues 192 to 202 show a composition bias toward low complexity; that stretch reads EAPAAEATDEA.

This sequence belongs to the bacterial ribosomal protein bL9 family.

Functionally, binds to the 23S rRNA. The sequence is that of Large ribosomal subunit protein bL9 from Rhizorhabdus wittichii (strain DSM 6014 / CCUG 31198 / JCM 15750 / NBRC 105917 / EY 4224 / RW1) (Sphingomonas wittichii).